We begin with the raw amino-acid sequence, 472 residues long: uncharacterized protein (472 aa).

6 helical membrane passes run 4–24 (IIILLALGLLMFTAYRGFSVI), 27–47 (APICALFAVLLTDPSHVLPFF), 56–76 (AGFIKLYFPVFLLGAIFGKVV), 99–119 (ILAIVLMGAVLTYSGVSLFVV), 140–160 (LIPGTIALGAFTFTMDALPGT), and 176–196 (IYAAPWLGLMGAVIVLAAGML). The disordered stretch occupies residues 209–229 (GEGYGGFDSQNAPAPESIESA). The span at 220–229 (APAPESIESA) shows a compositional bias: low complexity. The next 5 membrane-spanning stretches (helical) occupy residues 240–260 (ALAFVPLILVGAVNKYFTIYL), 286–306 (AAAIWSVEIALVIGIITTILF), 323–343 (IGGALLASMNTGAEYGFGGII), 372–392 (TALAGITGSASGGMGIALSAM), and 448–468 (IFAITLIKTAAVFAVIAIYSL).

This sequence belongs to the CitM (TC 2.A.11) transporter family.

The protein resides in the cell membrane. This is an uncharacterized protein from Bacillus subtilis (strain 168).